A 615-amino-acid polypeptide reads, in one-letter code: Medium-chain acyl-CoA ligase ACSF2, mitochondrial (615 aa).

Residues 1 to 41 constitute a mitochondrion transit peptide; sequence MAVYHGMLRFGRLCIASLGARGPRTLLSRPRPNSKLQSVRA. Lys-179 bears the N6-acetyllysine mark. Lys-182 is modified (N6-acetyllysine; alternate). Lys-182 bears the N6-succinyllysine; alternate mark. Lys-199 is modified (N6-acetyllysine). Residue 263–271 coordinates ATP; sequence TSGTTGNPK. An N6-acetyllysine mark is found at Lys-340 and Lys-398. Lys-478 carries the N6-succinyllysine modification. 2 residues coordinate ATP: Asp-493 and Arg-508. Lys-510 bears the N6-acetyllysine mark. N6-acetyllysine; alternate occurs at positions 544 and 570. Residues Lys-544 and Lys-570 each carry the N6-succinyllysine; alternate modification. Lys-599 is a binding site for ATP. Lys-599 bears the N6-succinyllysine mark.

It belongs to the ATP-dependent AMP-binding enzyme family.

The protein localises to the mitochondrion. The catalysed reaction is a medium-chain fatty acid + ATP + CoA = a medium-chain fatty acyl-CoA + AMP + diphosphate. It carries out the reaction octanoate + ATP + CoA = octanoyl-CoA + AMP + diphosphate. Its function is as follows. Acyl-CoA synthases catalyze the initial reaction in fatty acid metabolism, by forming a thioester with CoA. Has some preference toward medium-chain substrates. Plays a role in adipocyte differentiation. The polypeptide is Medium-chain acyl-CoA ligase ACSF2, mitochondrial (Mus musculus (Mouse)).